The sequence spans 984 residues: MDTFKRWLNKPKADDKSLLARFFHADRSLTAVASELDSFDGRAEPDRCTRLVSRLRQNQDKVLAITNLIMEELLGEDRDPRAFRAKFPEEVLQENLAGQLWFGAECLAAGSSIMNRETESKEMRPLAQAVTKSLGNVRVLLRDQCLKNNVPNSKTLHLDLNDSTTEQLYESLKIFDRLFAEFELSYVSAMVQVKSRHEYEMQQWIGVLFSETLQRALKIGLLDQEMVDAFDPGLMFSIPRLAIVAGLVVYAKGPLNMDMPGDQLSEMFRPFRTILIKIRDLLRNLNNQELYQLEKLLCTNEDINTKVPLGSSSIEAPSPEHSAHPTTSSSQNNNNSSNNNHSSSSSTTTTMGTTSTHRTVERLVDQRNNNHNSNSNSSTNPTVEGATLRSPSMLSLSPTSTPTASPAPSPTPSHSIASTSSAATSSTNPPADWSDGDDEDEDDDDIEVDEEDLESSDDDTDEEQLLKDIVAADCASGYLIPNTNLGNLLQPQEVPLTDNFVASEDDEYGTTEQQGHQGLEEEEPSTSAAMLAATRTLQRLRLPSSDTEPLAEPTTIKATEEHMQQPSGRHRESHSHRHHQRHHHHHHHRHSHQHQHRQPHPHRTTRSGRKRCSLEAVDPETIQPEREQNLASGDTSAASSLSDDVSLAMRNTTARLKFKSTENLLHRLFVCIAGVADQLQTNFASDLRQILRSVFLMNMSSAQEEIDIPEKTKESELFEFRASENDVIQESAGSNQSIYSAEEVNPELDNVFSAGGGNQATGQRHSAGASMQRNNTIDLANQPGEGSPSGATMATSRSHVTRSRSLGDQEAASSATSSTAHLRQQEQQQQHQQLQIQLQRQRNNSVGSNTPSSASSTSSSSEQNSPVSARSGSRRRLQSNNETQMPSSATSTSATLSPPAWIPDGKAPRCMACQTPFTAFRRRHHCRNCGGVFCGVCSNASAPLPKYGLTKAVRVCRDCYVREVRSGMGVQGVQRVQSVQASAS.

Disordered stretches follow at residues 308 to 462 (PLGS…DTDE), 508 to 527 (YGTT…PSTS), 539 to 642 (RLRL…SSLS), and 749 to 900 (DNVF…SPPA). 4 stretches are compositionally biased toward low complexity: residues 326 to 356 (TTSS…TTST), 369 to 380 (NNHNSNSNSSTN), 387 to 404 (TLRS…TPTA), and 412 to 433 (PSHS…PADW). Positions 434–462 (SDGDDEDEDDDDIEVDEEDLESSDDDTDE) are enriched in acidic residues. Residues Ser-544 and Ser-545 each carry the phosphoserine modification. Basic residues predominate over residues 571-611 (RESHSHRHHQRHHHHHHHRHSHQHQHRQPHPHRTTRSGRKR). Residues 630–642 (LASGDTSAASSLS) are compositionally biased toward low complexity. 2 stretches are compositionally biased toward polar residues: residues 760–779 (ATGQ…TIDL) and 789–806 (SGAT…SRSL). Residue Ser-805 is modified to Phosphoserine. Composition is skewed to low complexity over residues 811–869 (AASS…PVSA) and 886–899 (PSSA…LSPP). An FYVE-type zinc finger spans residues 904–964 (DGKAPRCMAC…VCRDCYVREV (61 aa)). 8 residues coordinate Zn(2+): Cys-910, Cys-913, Cys-926, Cys-929, Cys-934, Cys-937, Cys-956, and Cys-959.

This sequence belongs to the lst-2 family.

In terms of biological role, negative regulator of epidermal growth factor receptor (EGFR) signaling. This chain is Lateral signaling target protein 2 homolog, found in Drosophila yakuba (Fruit fly).